Consider the following 300-residue polypeptide: MIQSRQLEAFRAVMLTGGMTSAANLVRITQPAISRLIRDLEEEIGISLFERTGNRLRPTREAGILFKEVSRHFNGIQHIDKVAAELKKSHMGSLRVACYTAPALSFMSGVIQTFIADRPDVSVYLDTVPSQTVLELVSLQHYDLGISILAGDYPGLTTEPVPSFRAVCLLPPGHRLEDKETVHATDLEGESLICLSPVSLLRMQTDAALDSCGVHCNRRIESSLALNLCDLVSRGMGVGIVDPFTADYYSANPVIQRSFDPVVPYHFAIVLPTDSPPPRLVSEFRAALLDALKALPYETI.

One can recognise an HTH lysR-type domain in the interval 1 to 59; that stretch reads MIQSRQLEAFRAVMLTGGMTSAANLVRITQPAISRLIRDLEEEIGISLFERTGNRLRPT. Positions 19–38 form a DNA-binding region, H-T-H motif; sequence MTSAANLVRITQPAISRLIR.

It belongs to the LysR transcriptional regulatory family.

Its function is as follows. Positive regulatory protein for the noc operon involved in nopaline catabolism and uptake. This Agrobacterium fabrum (strain C58 / ATCC 33970) (Agrobacterium tumefaciens (strain C58)) protein is Regulatory protein NocR (nocR).